The chain runs to 529 residues: Bifunctional purine biosynthesis protein PurH (529 aa).

The region spanning 1–148 is the MGS-like domain; the sequence is MQQRRPVRRA…KNHKDVAIVV (148 aa). Lysine 287 bears the N6-acetyllysine mark.

This sequence belongs to the PurH family.

It catalyses the reaction (6R)-10-formyltetrahydrofolate + 5-amino-1-(5-phospho-beta-D-ribosyl)imidazole-4-carboxamide = 5-formamido-1-(5-phospho-D-ribosyl)imidazole-4-carboxamide + (6S)-5,6,7,8-tetrahydrofolate. The enzyme catalyses IMP + H2O = 5-formamido-1-(5-phospho-D-ribosyl)imidazole-4-carboxamide. The protein operates within purine metabolism; IMP biosynthesis via de novo pathway; 5-formamido-1-(5-phospho-D-ribosyl)imidazole-4-carboxamide from 5-amino-1-(5-phospho-D-ribosyl)imidazole-4-carboxamide (10-formyl THF route): step 1/1. Its pathway is purine metabolism; IMP biosynthesis via de novo pathway; IMP from 5-formamido-1-(5-phospho-D-ribosyl)imidazole-4-carboxamide: step 1/1. This chain is Bifunctional purine biosynthesis protein PurH, found in Escherichia coli O127:H6 (strain E2348/69 / EPEC).